A 231-amino-acid chain; its full sequence is 7-cyano-7-deazaguanine synthase (231 aa).

ATP is bound at residue 8–18 (FSGGQDSTTCL). Zn(2+) is bound by residues Cys188, Cys197, Cys200, and Cys203.

It belongs to the QueC family. It depends on Zn(2+) as a cofactor.

It catalyses the reaction 7-carboxy-7-deazaguanine + NH4(+) + ATP = 7-cyano-7-deazaguanine + ADP + phosphate + H2O + H(+). Its pathway is purine metabolism; 7-cyano-7-deazaguanine biosynthesis. Its function is as follows. Catalyzes the ATP-dependent conversion of 7-carboxy-7-deazaguanine (CDG) to 7-cyano-7-deazaguanine (preQ(0)). This is 7-cyano-7-deazaguanine synthase from Enterobacter sp. (strain 638).